We begin with the raw amino-acid sequence, 121 residues long: Protein PilH (121 aa).

One can recognise a Response regulatory domain in the interval 3-119 (RILIVDDSPT…TLLKTINAVL (117 aa)). Aspartate 52 carries the post-translational modification 4-aspartylphosphate.

Functionally, may be a part of a signal-transduction system that regulates twitching motility by controlling pilus function (extension and retraction). This chain is Protein PilH (pilH), found in Pseudomonas aeruginosa (strain ATCC 15692 / DSM 22644 / CIP 104116 / JCM 14847 / LMG 12228 / 1C / PRS 101 / PAO1).